Consider the following 648-residue polypeptide: Penicillin-binding protein PbpB (648 aa).

A disordered region spans residues 1 to 35 (MSRRGDRPRTPAQPRKKARVDQPRSARTRRTRVSE). A helical membrane pass occupies residues 52–72 (GNLAILAVLVIAAVQLFMLQV). Serine 355 (acyl-ester intermediate) is an active-site residue.

This sequence belongs to the transpeptidase family. Interacts with Wag31.

The protein resides in the cell membrane. The protein is Penicillin-binding protein PbpB (pbpB) of Mycolicibacterium smegmatis (strain ATCC 700084 / mc(2)155) (Mycobacterium smegmatis).